Consider the following 423-residue polypeptide: GPI mannosyltransferase 2 (423 aa).

Helical transmembrane passes span 7-27 (LTLIFIAACLSRILQLTILSG), 102-122 (VILGGTIVANVAFVAATLVLY), 128-148 (IFNPTFAFLTSLLYLLPPTAT), 151-171 (APYTEPIYSLLTFSGIYLLSI), 191-211 (TGIFNSITLMCFAVFGDAHIF), 228-248 (FLSAILVVAPFFMFQHYTETV), 298-318 (LAMPILFFSLAGVVKFFSHLV), 333-353 (PPPILFELYSVHVLTMALLLF), and 400-420 (YWIGWTVVWGAVAAVLWAGHY).

The protein belongs to the PIGV family.

The protein localises to the endoplasmic reticulum membrane. It functions in the pathway glycolipid biosynthesis; glycosylphosphatidylinositol-anchor biosynthesis. Its function is as follows. Mannosyltransferase involved in glycosylphosphatidylinositol-anchor biosynthesis. Transfers the second mannose to the glycosylphosphatidylinositol during GPI precursor assembly. The protein is GPI mannosyltransferase 2 (GPI18) of Cryptococcus neoformans var. neoformans serotype D (strain JEC21 / ATCC MYA-565) (Filobasidiella neoformans).